The following is a 390-amino-acid chain: MKVVLSYSGGLDTTVCIPLLKEKYGFDEVITVTVDIGQPEADIKQAEERGKKYADKHYTIDAKKEFVDSLFMLIKANGNYEGYVLGTALARPLIAEKVVEVAKKEGAEAVAHGCTGKGNDQLRFENIFRQHGFKVIAPVRELNLTREWEIEYARQHGIEVPATKEKPYSIDENLWSRSVEGGKLEDPSFEPPEDIYEWTASPEKAPDKPEIVKIDFEKGVPVALNDERMGGFELIKALNEIGGKHGVGRTDMIEDRVLGLKARENYEHPAATILITAHRDLENLVLSRRELKFKKFVEEEWAELVYYGLVNDPLFDALNAFIDKTQERVTGWVKVKLYKGSAVVVARNSPYALYSEELVSFDTESIDQRLAEGFAAFHGLQGRLFRRLFQ.

ATP is bound at residue 6–14; it reads SYSGGLDTT. Tyrosine 83 is a binding site for L-citrulline. Glycine 113 serves as a coordination point for ATP. Residues threonine 115, asparagine 119, and aspartate 120 each contribute to the L-aspartate site. Position 119 (asparagine 119) interacts with L-citrulline. Arginine 123, serine 169, serine 178, glutamate 254, and tyrosine 266 together coordinate L-citrulline.

This sequence belongs to the argininosuccinate synthase family. Type 1 subfamily. As to quaternary structure, homotetramer.

Its subcellular location is the cytoplasm. It catalyses the reaction L-citrulline + L-aspartate + ATP = 2-(N(omega)-L-arginino)succinate + AMP + diphosphate + H(+). The protein operates within amino-acid biosynthesis; L-arginine biosynthesis; L-arginine from L-ornithine and carbamoyl phosphate: step 2/3. The sequence is that of Argininosuccinate synthase from Archaeoglobus fulgidus (strain ATCC 49558 / DSM 4304 / JCM 9628 / NBRC 100126 / VC-16).